Consider the following 352-residue polypeptide: A-type ATP synthase subunit C (352 aa).

This sequence belongs to the V-ATPase V0D/AC39 subunit family. As to quaternary structure, has multiple subunits with at least A(3), B(3), C, D, E, F, H, I and proteolipid K(x).

It is found in the cell membrane. Its function is as follows. Component of the A-type ATP synthase that produces ATP from ADP in the presence of a proton gradient across the membrane. The sequence is that of A-type ATP synthase subunit C from Halobacterium salinarum (strain ATCC 29341 / DSM 671 / R1).